The sequence spans 349 residues: MSNNDFLVLKNVTKAFGKAVVIDNLDLSIKRGTMVTLLGPSGCGKTTVLRLVAGLESPTSGQIFIDGEDVTKSSIQNRDICIVFQSYALFPHMSIGDNVGYGLKMQGVSKEERAKRVKEALELVDLAGFEDRYVDQISGGQQQRVALARALVLKPKVLLFDEPLSNLDANLRRSMREKIRELQQRLGITSLYVTHDQTEAFAVSDEVIVMHKGKIMQKAPAKELYLRPNSLFLANFMGESSIFQGTLQQDQVTVNGYQFKLNNAAQFGLTDGACLVGIRPEAISFKETGEAAQRCSIKSAVYMGNHWEIVANWGGQDLLVNTNPEQFNPELKEAYVHLAEHGVFLLKPE.

An ABC transporter domain is found at 7 to 237 (LVLKNVTKAF…PNSLFLANFM (231 aa)). 39-46 (GPSGCGKT) is an ATP binding site.

The protein belongs to the ABC transporter superfamily. Fe(3+) ion importer (TC 3.A.1.10) family. The complex is composed of two ATP-binding proteins (FbpC), two transmembrane proteins (FbpB) and a solute-binding protein (FbpA).

The protein resides in the cell inner membrane. The catalysed reaction is Fe(3+)(out) + ATP + H2O = Fe(3+)(in) + ADP + phosphate + H(+). In terms of biological role, part of the ABC transporter complex FbpABC involved in Fe(3+) ions import. Responsible for energy coupling to the transport system. This Pasteurella multocida (strain Pm70) protein is Fe(3+) ions import ATP-binding protein FbpC.